The following is a 211-amino-acid chain: Proteasome subunit beta 2 (211 aa).

The propeptide at 1-17 is removed in mature form; by autocatalysis; that stretch reads MVIMGNELQLENKILKG. T18 serves as the catalytic Nucleophile.

Belongs to the peptidase T1B family. The 20S proteasome core is composed of 14 alpha and 14 beta subunits that assemble into four stacked heptameric rings, resulting in a barrel-shaped structure. The two inner rings, each composed of seven catalytic beta subunits, are sandwiched by two outer rings, each composed of seven alpha subunits. The catalytic chamber with the active sites is on the inside of the barrel. Has a gated structure, the ends of the cylinder being occluded by the N-termini of the alpha-subunits. Is capped at one or both ends by the proteasome regulatory ATPase, PAN.

The protein resides in the cytoplasm. The enzyme catalyses Cleavage of peptide bonds with very broad specificity.. With respect to regulation, the formation of the proteasomal ATPase PAN-20S proteasome complex, via the docking of the C-termini of PAN into the intersubunit pockets in the alpha-rings, triggers opening of the gate for substrate entry. Interconversion between the open-gate and close-gate conformations leads to a dynamic regulation of the 20S proteasome proteolysis activity. In terms of biological role, component of the proteasome core, a large protease complex with broad specificity involved in protein degradation. The sequence is that of Proteasome subunit beta 2 from Saccharolobus solfataricus (strain 98/2) (Sulfolobus solfataricus).